The chain runs to 383 residues: MSTWLLPENIADVLPSEARKIEELRRHLLDRFRSYGYEMVMPPLLEYIESLLTGGGHDLNLRTFKLVDQLSGRTLGLRADITPQVARIDAHLLNRQGVTRLCYAGNVAHTRPRGLHATREQIQIGAEIYGHAGLEADLEIQQLMLDALRLAGLAKVRLDLCHAGVLAALIEAEPAAAELGQSLYDALAGKDVPRLVELTANLTPVIRDALRALPRLYGDASVLDEARARLPNMPAIARALDDLAFLASQVDGAEVMIDLADLRGYAYHSGVMFSAYVDGVPNAVARGGRYDHVGQAYGRARAATGFSLDLREVARISPVEARSSAILAPWQHDEALRVSVAALRDAGEVVIQALPGHEHDLDEFAFDRVLVERSGNWVVEPRA.

It belongs to the class-II aminoacyl-tRNA synthetase family. HisZ subfamily. As to quaternary structure, heteromultimer composed of HisG and HisZ subunits.

It is found in the cytoplasm. The protein operates within amino-acid biosynthesis; L-histidine biosynthesis; L-histidine from 5-phospho-alpha-D-ribose 1-diphosphate: step 1/9. Required for the first step of histidine biosynthesis. May allow the feedback regulation of ATP phosphoribosyltransferase activity by histidine. The polypeptide is ATP phosphoribosyltransferase regulatory subunit (Paraburkholderia xenovorans (strain LB400)).